The primary structure comprises 143 residues: Hemoglobin subunit alpha-2 (143 aa).

Ser2 is subject to N-acetylserine. The region spanning Ser2–Arg143 is the Globin domain. His60 contributes to the O2 binding site. Residue His89 coordinates heme b.

It belongs to the globin family. Hb 2 is a heterotetramer of two alpha-2 and two beta-1 chains. Hb 3 is a heterotetramer of two alpha-2 and two beta-2 chains. As to expression, red blood cells.

Functionally, involved in oxygen transport from gills to the various peripheral tissues. The protein is Hemoglobin subunit alpha-2 (hba2) of Boreogadus saida (Polar cod).